Consider the following 166-residue polypeptide: Large ribosomal subunit protein uL10 (166 aa).

It belongs to the universal ribosomal protein uL10 family. In terms of assembly, part of the ribosomal stalk of the 50S ribosomal subunit. The N-terminus interacts with L11 and the large rRNA to form the base of the stalk. The C-terminus forms an elongated spine to which L12 dimers bind in a sequential fashion forming a multimeric L10(L12)X complex.

Forms part of the ribosomal stalk, playing a central role in the interaction of the ribosome with GTP-bound translation factors. The protein is Large ribosomal subunit protein uL10 of Shewanella oneidensis (strain ATCC 700550 / JCM 31522 / CIP 106686 / LMG 19005 / NCIMB 14063 / MR-1).